The sequence spans 211 residues: NADH-quinone oxidoreductase subunit I (211 aa).

4Fe-4S ferredoxin-type domains lie at arginine 90 to lysine 119 and threonine 129 to glutamate 158. Residues cysteine 99, cysteine 102, cysteine 105, cysteine 109, cysteine 138, cysteine 141, cysteine 144, and cysteine 148 each coordinate [4Fe-4S] cluster.

Belongs to the complex I 23 kDa subunit family. As to quaternary structure, NDH-1 is composed of 14 different subunits. Subunits NuoA, H, J, K, L, M, N constitute the membrane sector of the complex. It depends on [4Fe-4S] cluster as a cofactor.

It is found in the cell inner membrane. The enzyme catalyses a quinone + NADH + 5 H(+)(in) = a quinol + NAD(+) + 4 H(+)(out). NDH-1 shuttles electrons from NADH, via FMN and iron-sulfur (Fe-S) centers, to quinones in the respiratory chain. The immediate electron acceptor for the enzyme in this species is believed to be ubiquinone. Couples the redox reaction to proton translocation (for every two electrons transferred, four hydrogen ions are translocated across the cytoplasmic membrane), and thus conserves the redox energy in a proton gradient. This is NADH-quinone oxidoreductase subunit I from Sulfurimonas denitrificans (strain ATCC 33889 / DSM 1251) (Thiomicrospira denitrificans (strain ATCC 33889 / DSM 1251)).